We begin with the raw amino-acid sequence, 207 residues long: MSNKVQMDNDFMQMQKPFALFAKWLEEATVSEINDPNAMALATVDETGLPNVRMVLLKDFSSRGFVFYTNYESCKGQEILKSMKASLVFHWKSLRRQIRIRGIVEKVSTQEADVYFQSRPRGSRIGAWASKQSQPLENRFVLEKAIAQYTARYAVGNIPRPPYWSGFRVKPLSIEFWCDRPFRLHDRLLFTRDSVEQVDWQRQKLYP.

Residues 53 to 58, 68 to 69, Lys-75, and Gln-97 contribute to the FMN site; these read RMVLLK and YT. Lys-58 serves as a coordination point for substrate. Residues Tyr-115, Arg-119, and Ser-123 each contribute to the substrate site. FMN-binding positions include 132 to 133 and Trp-177; that span reads QS. 183-185 contributes to the substrate binding site; that stretch reads RLH. Arg-187 is an FMN binding site.

The protein belongs to the pyridoxamine 5'-phosphate oxidase family. As to quaternary structure, homodimer. The cofactor is FMN.

The enzyme catalyses pyridoxamine 5'-phosphate + O2 + H2O = pyridoxal 5'-phosphate + H2O2 + NH4(+). It carries out the reaction pyridoxine 5'-phosphate + O2 = pyridoxal 5'-phosphate + H2O2. It participates in cofactor metabolism; pyridoxal 5'-phosphate salvage; pyridoxal 5'-phosphate from pyridoxamine 5'-phosphate: step 1/1. The protein operates within cofactor metabolism; pyridoxal 5'-phosphate salvage; pyridoxal 5'-phosphate from pyridoxine 5'-phosphate: step 1/1. Functionally, catalyzes the oxidation of either pyridoxine 5'-phosphate (PNP) or pyridoxamine 5'-phosphate (PMP) into pyridoxal 5'-phosphate (PLP). This is Pyridoxine/pyridoxamine 5'-phosphate oxidase from Bartonella quintana (strain Toulouse) (Rochalimaea quintana).